A 362-amino-acid polypeptide reads, in one-letter code: Lipoprotein p35 (362 aa).

Positions methionine 1–serine 30 are cleaved as a signal peptide. The N-palmitoyl cysteine moiety is linked to residue cysteine 31. Residue cysteine 31 is the site of S-diacylglycerol cysteine attachment. Residues serine 33–glutamine 53 are disordered.

Belongs to the p35 lipoprotein family. Post-translationally, the N-terminus is blocked.

Its subcellular location is the cell membrane. In terms of biological role, major M.penetrans antigen. This Malacoplasma penetrans (Mycoplasma penetrans) protein is Lipoprotein p35.